The sequence spans 713 residues: Nucleolin (713 aa).

The segment at 1-309 is disordered; that stretch reads MVKLAKAGKT…QKIEGSEPTT (309 aa). N6-acetyllysine occurs at positions 9, 15, and 16. Acidic residues predominate over residues 24-46; sequence VEEDSEDEEMSEDEDDSSGEEEV. Phosphoserine occurs at positions 28, 34, 40, and 41. Positions 56–111 are enriched in low complexity; it reads ATTTPAKKVVVSQTKKAAVPTPAKKAAVTPGKKAAATPAKKAVTPAKVVPTPGKKG. Copy 1 of the repeat occupies 58-65; that stretch reads TTPAKKVV. Residues 58-135 form an 8 X 8 AA tandem repeats of X-T-P-X-K-K-X-X region; it reads TTPAKKVVVS…GAVTPAKGAK (78 aa). S67 bears the Phosphoserine mark. A phosphothreonine mark is found at T69, T76, T84, and T92. 3 tandem repeats follow at residues 75–82, 83–90, and 91–98. Position 96 is an N6-acetyllysine (K96). A Phosphothreonine modification is found at T99. The stretch at 99-104 is one 5; truncated repeat; sequence TPAKVV. N6-acetyllysine is present on K102. The stretch at 105-112 is repeat 6; the sequence is PTPGKKGA. A Phosphothreonine modification is found at T106. K109 and K116 each carry N6-acetyllysine. 2 repeat units span residues 120–127 and 128–135. T121 carries the post-translational modification Phosphothreonine. Position 124 is an N6-acetyllysine (K124). 2 positions are modified to phosphoserine: S145 and S157. A compositionally biased stretch (acidic residues) spans 145-168; that stretch reads SDEDEDEEDEDDSDEDEDEEDEFE. Positions 169–186 are enriched in low complexity; that stretch reads PPVVKGVKPAKAAPAAPA. S187 and S213 each carry phosphoserine. Over residues 187–218 the composition is skewed to acidic residues; the sequence is SEDEDEEDDDDEDDDDDDEEEEEEDDSEEEVM. The residue at position 221 (T221) is a Phosphothreonine. Acidic residues predominate over residues 242–275; sequence EEEEDDEDDEDEEEDEDEEDEEDDEDEDEEEEEE. Residues 288 to 304 are compositionally biased toward basic and acidic residues; the sequence is MTKQKEAPEAKKQKIEG. K301 is covalently cross-linked (Glycyl lysine isopeptide (Lys-Gly) (interchain with G-Cter in SUMO1); alternate). Residue K301 forms a Glycyl lysine isopeptide (Lys-Gly) (interchain with G-Cter in SUMO2); alternate linkage. S305 is subject to Phosphoserine. 2 consecutive RRM domains span residues 311-387 and 397-470; these read FNLF…KPKG and RTLL…YTGE. K322 is modified (N6-acetyllysine). K328 participates in a covalent cross-link: Glycyl lysine isopeptide (Lys-Gly) (interchain with G-Cter in SUMO1); alternate. Residue K328 forms a Glycyl lysine isopeptide (Lys-Gly) (interchain with G-Cter in SUMO2); alternate linkage. Residue K352 is modified to N6-acetyllysine. S360 is modified (phosphoserine). T371 bears the Phosphothreonine mark. A Glycyl lysine isopeptide (Lys-Gly) (interchain with G-Cter in SUMO2) cross-link involves residue K374. A Glycyl lysine isopeptide (Lys-Gly) (interchain with G-Cter in SUMO2); alternate cross-link involves residue K381. The residue at position 381 (K381) is an N6-acetyllysine; alternate. Residue K402 is modified to N6-acetyllysine. S405 bears the Phosphoserine mark. At T409 the chain carries Phosphothreonine. K448 is subject to N6-acetyllysine. S462 and S464 each carry phosphoserine. N6-acetyllysine is present on residues K471 and K480. One can recognise an RRM 3 domain in the interval 489–563; sequence KTLVLSNLSY…RTIRLELQGP (75 aa). A Glycyl lysine isopeptide (Lys-Gly) (interchain with G-Cter in SUMO2); alternate cross-link involves residue K516. K516 is modified (N6-acetyllysine; alternate). The residue at position 524 (K524) is an N6-acetyllysine. At S566 the chain carries Phosphoserine. N6-acetyllysine is present on K575. Residues 575–650 form the RRM 4 domain; the sequence is KTLFVKGLSE…NKVTLDWAKP (76 aa). Residue K580 forms a Glycyl lysine isopeptide (Lys-Gly) (interchain with G-Cter in SUMO2); alternate linkage. At K580 the chain carries N6-acetyllysine; alternate. Residue S583 is modified to Phosphoserine. K592 participates in a covalent cross-link: Glycyl lysine isopeptide (Lys-Gly) (interchain with G-Cter in SUMO1); alternate. A Glycyl lysine isopeptide (Lys-Gly) (interchain with G-Cter in SUMO2); alternate cross-link involves residue K592. A phosphoserine mark is found at S594 and S622. A Glycyl lysine isopeptide (Lys-Gly) (interchain with G-Cter in SUMO2) cross-link involves residue K627. The tract at residues 645-713 is disordered; that stretch reads LDWAKPKGEG…KPQGKKTKFE (69 aa). K649 carries the N6-acetyllysine modification. Gly residues predominate over residues 653–702; sequence EGGFGGRGGGRGGFGGRGGGRGGRGGFGGRGRGGFGGRGGFRGGRGGGGD. An asymmetric dimethylarginine mark is found at R659, R663, R669, R673, R676, R682, R684, R690, and R694. An Asymmetric dimethylarginine; alternate modification is found at R697. At R697 the chain carries Omega-N-methylarginine; alternate.

In terms of assembly, identified in a IGF2BP1-dependent mRNP granule complex containing untranslated mRNAs. Component of the SWAP complex that consists of NPM1, NCL/nucleolin, PARP1 and SWAP70. Component of a complex which is at least composed of HTATSF1/Tat-SF1, the P-TEFb complex components CDK9 and CCNT1, RNA polymerase II, SUPT5H, and NCL/nucleolin. Interacts with AICDA. Interacts with APTX. Interacts with C1QBP. Interacts with ERBB4. Interacts (via C-terminus) with FMR1 isoform 6 (via N-terminus). Interacts with GZF1; this interaction is important for nucleolar localization of GZF1. Interacts with NSUN2. Interacts with NVL. Interacts (via N-terminus domain) with SETX. Interacts (via RRM1 and C-terminal RRM4/Arg/Gly-rich domains) with TERT; the interaction is important for nucleolar localization of TERT. Interacts with WDR46. Interacts with ZFP36. Interacts with LRRC34. Interacts with RRP1B. Interacts with HNRNPU; this interaction occurs during mitosis. Interacts with RIOK1; RIOK1 recruits NCL to PRMT5 for symmetrically methylation. Interacts with ZBTB7B. Interacts with MDK; this interaction promotes NCL clustering and lateral movements of this complex into lipid rafts leading to MDK internalization. Interacts with HDGF. Interacts with ALKBH2. Interacts with IGFBP5; this interaction is necessary for IGFBP5 localization to the nucleus. Interacts with DDX24 (when ubiquitinated); this interaction may be important during ribosome biogenesis. Post-translationally, some glutamate residues are glycylated by TTLL8. This modification occurs exclusively on glutamate residues and results in a glycine chain on the gamma-carboxyl group. In terms of processing, symmetrically methylated by PRMT5.

It is found in the nucleus. It localises to the nucleolus. The protein resides in the cytoplasm. Functionally, nucleolin is the major nucleolar protein of growing eukaryotic cells. It is found associated with intranucleolar chromatin and pre-ribosomal particles. It induces chromatin decondensation by binding to histone H1. It is thought to play a role in pre-rRNA transcription and ribosome assembly. May play a role in the process of transcriptional elongation. Binds RNA oligonucleotides with 5'-UUAGGG-3' repeats more tightly than the telomeric single-stranded DNA 5'-TTAGGG-3' repeats. This chain is Nucleolin (Ncl), found in Rattus norvegicus (Rat).